We begin with the raw amino-acid sequence, 264 residues long: Small ribosomal subunit protein eS1 (264 aa).

Lys34 is subject to N6-acetyllysine; alternate. Residue Lys34 forms a Glycyl lysine isopeptide (Lys-Gly) (interchain with G-Cter in SUMO2); alternate linkage. Lys56 carries the post-translational modification N6-acetyllysine. The residue at position 155 (Tyr155) is an ADP-ribosyltyrosine. A disordered region spans residues 232 to 264 (HGEGGSSGKTTGDETGAKVERADGYEPPVQESV). The residue at position 237 (Ser237) is a Phosphoserine. Over residues 242 to 255 (TGDETGAKVERADG) the composition is skewed to basic and acidic residues. Lys249 is subject to N6-acetyllysine; alternate. Lys249 is covalently cross-linked (Glycyl lysine isopeptide (Lys-Gly) (interchain with G-Cter in SUMO2); alternate). Tyr256 is subject to Phosphotyrosine. A Phosphoserine modification is found at Ser263.

The protein belongs to the eukaryotic ribosomal protein eS1 family. As to quaternary structure, component of the small ribosomal subunit. Mature ribosomes consist of a small (40S) and a large (60S) subunit. The 40S subunit contains about 33 different proteins and 1 molecule of RNA (18S). The 60S subunit contains about 49 different proteins and 3 molecules of RNA (28S, 5.8S and 5S). Identified in a IGF2BP1-dependent mRNP granule complex containing untranslated mRNAs. Binds with high affinity to IPO4. Interacts with DDIT3. Part of the small subunit (SSU) processome, composed of more than 70 proteins and the RNA chaperone small nucleolar RNA (snoRNA) U3. In terms of processing, the protein designated S3b has the same amino acid sequence as S3a except that it lacks the C-terminal 12 residues. It is probable that S3a is converted by proteolysis, either physiologically or fortuitously, to S3b. ADP-ribosylated at Tyr-155 by PARP1 in presence of HPF1.

It is found in the cytoplasm. It localises to the nucleus. Its subcellular location is the nucleolus. In terms of biological role, component of the small ribosomal subunit. The ribosome is a large ribonucleoprotein complex responsible for the synthesis of proteins in the cell. Part of the small subunit (SSU) processome, first precursor of the small eukaryotic ribosomal subunit. During the assembly of the SSU processome in the nucleolus, many ribosome biogenesis factors, an RNA chaperone and ribosomal proteins associate with the nascent pre-rRNA and work in concert to generate RNA folding, modifications, rearrangements and cleavage as well as targeted degradation of pre-ribosomal RNA by the RNA exosome. May play a role during erythropoiesis through regulation of transcription factor DDIT3. This Rattus norvegicus (Rat) protein is Small ribosomal subunit protein eS1 (Rps3a).